The primary structure comprises 282 residues: MQIVNISAYKFVTLEDIETLRPVMRERCDAAGLKGTILLAPEGINMFLAGTREQIDEFMAWLHADARFADIAPKESLSENQPFKRMLVRAKKEIITMKMPLIRPEAGRAPSVRPVDLKRWLDQGHDDDGRPVVMLDTRNAFEVAVGTFDKAVEYGIDKFSEFPPAVAENKAEFEGKTIVSFCTGGIRCEKAAIHMQEVGIDHVYQLEGGILKYFEEVGGSHYNGDCFVFDYRTALNPNLEPAGPVQCFACRAVVTPEEQQHPKYVVGKSCPHCVDTATQAAA.

In terms of domain architecture, Rhodanese spans 128 to 222 (DGRPVVMLDT…YFEEVGGSHY (95 aa)). The active-site Cysteine persulfide intermediate is C182.

The protein belongs to the TrhO family.

The catalysed reaction is uridine(34) in tRNA + AH2 + O2 = 5-hydroxyuridine(34) in tRNA + A + H2O. In terms of biological role, catalyzes oxygen-dependent 5-hydroxyuridine (ho5U) modification at position 34 in tRNAs. The chain is tRNA uridine(34) hydroxylase from Cupriavidus metallidurans (strain ATCC 43123 / DSM 2839 / NBRC 102507 / CH34) (Ralstonia metallidurans).